A 224-amino-acid chain; its full sequence is ATP-dependent dethiobiotin synthetase BioD (224 aa).

14-19 lines the ATP pocket; sequence GIGKTV. T18 lines the Mg(2+) pocket. K39 is an active-site residue. S43 contributes to the substrate binding site. ATP-binding positions include D56, 117–120, and 177–178; these read EGVG and NE. Residues D56 and E117 each contribute to the Mg(2+) site.

This sequence belongs to the dethiobiotin synthetase family. As to quaternary structure, homodimer. The cofactor is Mg(2+).

It localises to the cytoplasm. It catalyses the reaction (7R,8S)-7,8-diammoniononanoate + CO2 + ATP = (4R,5S)-dethiobiotin + ADP + phosphate + 3 H(+). Its pathway is cofactor biosynthesis; biotin biosynthesis; biotin from 7,8-diaminononanoate: step 1/2. In terms of biological role, catalyzes a mechanistically unusual reaction, the ATP-dependent insertion of CO2 between the N7 and N8 nitrogen atoms of 7,8-diaminopelargonic acid (DAPA, also called 7,8-diammoniononanoate) to form a ureido ring. The chain is ATP-dependent dethiobiotin synthetase BioD from Xanthomonas campestris pv. campestris (strain B100).